The sequence spans 402 residues: Argininosuccinate synthase (402 aa).

ATP is bound at residue 9-17 (AYSGGLDTS). Tyrosine 87 contacts L-citrulline. Glycine 117 contacts ATP. L-aspartate-binding residues include threonine 119, asparagine 123, and aspartate 124. Asparagine 123 contributes to the L-citrulline binding site. Arginine 127, serine 176, serine 185, glutamate 261, and tyrosine 273 together coordinate L-citrulline.

It belongs to the argininosuccinate synthase family. Type 1 subfamily. Homotetramer.

The protein resides in the cytoplasm. The catalysed reaction is L-citrulline + L-aspartate + ATP = 2-(N(omega)-L-arginino)succinate + AMP + diphosphate + H(+). Its pathway is amino-acid biosynthesis; L-arginine biosynthesis; L-arginine from L-ornithine and carbamoyl phosphate: step 2/3. The chain is Argininosuccinate synthase from Chlorobium phaeobacteroides (strain BS1).